The sequence spans 2598 residues: Partially reducing polyketide synthase men1 (2598 aa).

The region spanning Ser7–Asp435 is the Ketosynthase family 3 (KS3) domain. Active-site for beta-ketoacyl synthase activity residues include Cys181, His316, and His358. Residues Gly450 to His459 show a composition bias toward basic residues. 2 disordered regions span residues Gly450–Thr490 and Ala537–Lys557. Over residues Val474–Thr490 the composition is skewed to low complexity. Residues Tyr611 to Ser915 form the Malonyl-CoA:ACP transacylase (MAT) domain. Positions Leu1008–Leu1151 are N-terminal hotdog fold. The 318-residue stretch at Leu1008–Met1325 folds into the PKS/mFAS DH domain. Positions Gly1009–Ser1323 are dehydratase (DH) domain. Residues Thr1169 to Met1325 form a C-terminal hotdog fold region. Residues Gly1886 to Ile2197 form the Enoyl reductase (ER) domain. The Ketoreductase (KR) domain maps to Thr2222–Lys2399. A Carrier domain is found at Glu2510–Gly2587. Residue Ser2547 is modified to O-(pantetheine 4'-phosphoryl)serine.

Requires pantetheine 4'-phosphate as cofactor.

The protein operates within secondary metabolite biosynthesis. In terms of biological role, partially reducing polyketide synthase; part of the gene cluster that mediates the biosynthesis of menisporopsin A, a bioactive macrocyclic polylactone. The biosynthesis of menisporopsin A is performed by a reducing (man1) and a non-reducing (men2) polyketide synthase that catalyze the formation of each menisporopsin A subunits, while the esterification and cyclolactonization activities are probably peformed by the unusual thioesterase domain of men2. First, a reduced diketide intermediate, 3-hydroxybutyryl-S-ACP is produced by men1 and transferred to men2; this is followed by a second reduced diketide which is further elongated using 3 units of malonyl-coA to form a reduced pentaketide. The cyclization of this intermediate by the PT domain forms the second subunit, 2,4-dihydroxy-6-(2-hydroxy-n-propyl)benzoyl-S-ACP. The TE domain of men2 then esterifies the secondary hydroxyl group on the side chain of the second subunit with the acyl-TE of the first subunit to form the first ester intermediate. This process occurs iteratively to form a linear tetraester intermediate. The final subunit is formed by a similar process, except that an extra malonyl-CoA is required in an additional elongation step to form a reduced hexaketide intermediate, and the carbonyl group next to the secondary hydroxyl group is reduced by a trans-acting ketoreductase. Again, the PT domain catalyzes cyclization to form the largest subunit, 2,4-dihydroxy-6-(2,4-dihydroxy-n-pentyl) benzoyl-S-ACP. Then the linear pentaester intermediate is formed. In this step, if the intermediate transfer rate is slow, intra- molecular cyclization involving the secondary hydroxyl group of the pentaester intermediate may occur to form menisporopsin B. Alternatively, transfer of the pentaester intermediate to the TE domain would allow cyclolactonization to be catalyzed by the TE to form menisporopsin A. The chain is Partially reducing polyketide synthase men1 from Menisporopsis theobromae.